The following is a 196-amino-acid chain: Transmembrane protein 52 (196 aa).

Positions 1-28 (MAPGPSATQGILLLLPLLPLSQVTLGSA) are cleaved as a signal peptide. The chain crosses the membrane as a helical span at residues 47–67 (LWHVGLILLAILLMLLCGVTA). Residues 162 to 196 (EEVAAPSEKTNSLPEALEPETTGGPQEPGPSAQRP) are disordered.

The protein resides in the membrane. This Mus musculus (Mouse) protein is Transmembrane protein 52 (Tmem52).